Reading from the N-terminus, the 126-residue chain is S-adenosylmethionine decarboxylase proenzyme (126 aa).

Ser63 functions as the Schiff-base intermediate with substrate; via pyruvic acid in the catalytic mechanism. Position 63 is a pyruvic acid (Ser); by autocatalysis (Ser63). The active-site Proton acceptor; for processing activity is the His68. Cys83 serves as the catalytic Proton donor; for catalytic activity.

It belongs to the prokaryotic AdoMetDC family. Type 1 subfamily. In terms of assembly, heterotetramer of two alpha and two beta chains arranged as a dimer of alpha/beta heterodimers. The cofactor is pyruvate. Post-translationally, is synthesized initially as an inactive proenzyme. Formation of the active enzyme involves a self-maturation process in which the active site pyruvoyl group is generated from an internal serine residue via an autocatalytic post-translational modification. Two non-identical subunits are generated from the proenzyme in this reaction, and the pyruvate is formed at the N-terminus of the alpha chain, which is derived from the carboxyl end of the proenzyme. The post-translation cleavage follows an unusual pathway, termed non-hydrolytic serinolysis, in which the side chain hydroxyl group of the serine supplies its oxygen atom to form the C-terminus of the beta chain, while the remainder of the serine residue undergoes an oxidative deamination to produce ammonia and the pyruvoyl group blocking the N-terminus of the alpha chain.

It catalyses the reaction S-adenosyl-L-methionine + H(+) = S-adenosyl 3-(methylsulfanyl)propylamine + CO2. Its pathway is amine and polyamine biosynthesis; S-adenosylmethioninamine biosynthesis; S-adenosylmethioninamine from S-adenosyl-L-methionine: step 1/1. Catalyzes the decarboxylation of S-adenosylmethionine to S-adenosylmethioninamine (dcAdoMet), the propylamine donor required for the synthesis of the polyamines spermine and spermidine from the diamine putrescine. The sequence is that of S-adenosylmethionine decarboxylase proenzyme from Pelotomaculum thermopropionicum (strain DSM 13744 / JCM 10971 / SI).